The primary structure comprises 728 residues: Catalase-peroxidase 1 (728 aa).

The first 16 residues, 1 to 16, serve as a signal peptide directing secretion; it reads MDKAQHTQGKCPVAHG. Positions 97–225 form a cross-link, tryptophyl-tyrosyl-methioninium (Trp-Tyr) (with M-251); that stretch reads WHSAGTYRMA…LAAVMMGLIY (129 aa). Histidine 98 acts as the Proton acceptor in catalysis. The segment at residues 225 to 251 is a cross-link (tryptophyl-tyrosyl-methioninium (Tyr-Met) (with W-97)); it reads YVNPEGVDGQPDPLKTAQDIRVTFERM. Histidine 266 serves as a coordination point for heme b.

It belongs to the peroxidase family. Peroxidase/catalase subfamily. Homodimer or homotetramer. The cofactor is heme b. Formation of the three residue Trp-Tyr-Met cross-link is important for the catalase, but not the peroxidase activity of the enzyme.

It carries out the reaction H2O2 + AH2 = A + 2 H2O. The catalysed reaction is 2 H2O2 = O2 + 2 H2O. Its function is as follows. Bifunctional enzyme with both catalase and broad-spectrum peroxidase activity. This chain is Catalase-peroxidase 1, found in Shewanella frigidimarina (strain NCIMB 400).